The sequence spans 335 residues: MWIHFAPLRIPFSRRLQTVAVLQWAVSFLAMAQCCIALYILLLFSRYWFLALLYGVWLYLDWDTPSKGGRRSNWVRSWIVWKYFAEYFPIKLLCTAPLDPKYNYIMGFHPHGVLVVGAFGNFCTEGTGFSRLFPGLTPHLLMLPAWFRVPFFREYIMSGSLVSSDRSSAHYLLSQKSGGQALVIAVGGPPEALDAKPGELTLQLLNRTGFIKMALTHGAHLVPVLSFGENDLYNQVNNPRGSLLRTTQEKLQKVLGIALPLFHGRGVFQYSWGLLPHRRPIYTVVGSPIPVAKTPCPTQEQISSLHALYVAKLRELYTTHKGNYGIPRDRSLVLC.

A run of 2 helical transmembrane segments spans residues 24 to 44 and 104 to 124; these read WAVS…LLLF and YIMG…NFCT. Residue Asn-206 is glycosylated (N-linked (GlcNAc...) asparagine).

This sequence belongs to the diacylglycerol acyltransferase family.

It localises to the endoplasmic reticulum membrane. The protein resides in the cytoplasm. It is found in the perinuclear region. The catalysed reaction is a 2-acylglycerol + an acyl-CoA = a 1,2-diacylglycerol + CoA. The enzyme catalyses a 2-acylglycerol + an acyl-CoA = a 1,2-diacyl-sn-glycerol + CoA. It catalyses the reaction a 2-acylglycerol + an acyl-CoA = a 2,3-diacyl-sn-glycerol + CoA. It carries out the reaction a 1-acylglycerol + an acyl-CoA = a 1,2-diacylglycerol + CoA. The catalysed reaction is a 1-acylglycerol + an acyl-CoA = a 1,3-diacylglycerol + CoA. The enzyme catalyses 1-O-alkylglycerol + an acyl-CoA = 1-O-alkyl-3-acylglycerol + CoA. It catalyses the reaction an acyl-CoA + a 1,2-diacyl-sn-glycerol = a triacyl-sn-glycerol + CoA. Its pathway is glycerolipid metabolism; triacylglycerol biosynthesis. Catalyzes the formation of diacylglycerol from 2-monoacylglycerol and fatty acyl-CoA. In terms of biological role, involved in glycerolipid synthesis and lipid metabolism. Catalyzes the formation of diacylglycerol, the precursor of triacylglycerol, by transferring the acyl chain of a fatty acyl-CoA to a monoacylglycerol. Plays a central role in absorption of dietary fat in the small intestine by catalyzing the resynthesis of triacylglycerol in enterocytes. Has a preference toward monoacylglycerols containing unsaturated fatty acids in an order of C18:3 &gt; C18:2 &gt; C18:1 &gt; C18:0 at sn-2. Able to use 1-monoalkylglycerol (1-MAkG, 1-O-alkylglycerol) as an acyl acceptor for the synthesis of monoalkyl-monoacylglycerol (MAMAG, 1-O-alkyl-3-acylglycerol or 1-O-alkyl-2-acylglycerol) and subsequently, with lower efficiency, may add another acyl chain producing monoalkyl-diacylglycerol (MADAG, 1-O-alkyl-2,3-diacylglycerol). Possesses weak but significant activity with diacylglycerol as substrate, producing triacylglycerol (triacyl-sn-glycerol). The sequence is that of 2-acylglycerol O-acyltransferase 2-B (mogat2-b) from Xenopus laevis (African clawed frog).